Here is a 63-residue protein sequence, read N- to C-terminus: Large ribosomal subunit protein uL29 (63 aa).

It belongs to the universal ribosomal protein uL29 family.

This is Large ribosomal subunit protein uL29 (rpmC) from Aggregatibacter actinomycetemcomitans (Actinobacillus actinomycetemcomitans).